The chain runs to 552 residues: Urocanate hydratase (552 aa).

Residues 49 to 50 (GG), glutamine 127, 173 to 175 (GMG), aspartate 193, 239 to 240 (NA), 260 to 264 (QTSAH), 270 to 271 (YI), and tyrosine 319 each bind NAD(+). Residue cysteine 407 is part of the active site. NAD(+) is bound at residue glycine 489.

It belongs to the urocanase family. Requires NAD(+) as cofactor.

It is found in the cytoplasm. The enzyme catalyses 4-imidazolone-5-propanoate = trans-urocanate + H2O. It functions in the pathway amino-acid degradation; L-histidine degradation into L-glutamate; N-formimidoyl-L-glutamate from L-histidine: step 2/3. Catalyzes the conversion of urocanate to 4-imidazolone-5-propionate. This Bacillus cereus (strain AH820) protein is Urocanate hydratase.